The chain runs to 132 residues: Histone H2B.1 (132 aa).

Positions 1-13 (MSSKASKAPASKA) are enriched in low complexity. The segment at 1–40 (MSSKASKAPASKAPAEKKPAAKKTSSSVDASKKRTKTRKE) is disordered. Residue lysine 7 is modified to N6-acetyllysine; alternate. Residue lysine 7 forms a Glycyl lysine isopeptide (Lys-Gly) (interchain with G-Cter in SUMO); alternate linkage. At serine 11 the chain carries Phosphoserine. Position 12 is an N6-acetyllysine (lysine 12). Residue lysine 17 is modified to N6-acetyllysine; alternate. A Glycyl lysine isopeptide (Lys-Gly) (interchain with G-Cter in SUMO); alternate cross-link involves residue lysine 17. Residue lysine 18 forms a Glycyl lysine isopeptide (Lys-Gly) (interchain with G-Cter in SUMO) linkage. Residue lysine 125 forms a Glycyl lysine isopeptide (Lys-Gly) (interchain with G-Cter in ubiquitin) linkage.

Belongs to the histone H2B family. As to quaternary structure, the nucleosome is a histone octamer containing two molecules each of H2A, H2B, H3 and H4 assembled in one H3-H4 heterotetramer and two H2A-H2B heterodimers. The octamer wraps approximately 147 bp of DNA. Monoubiquitinated by the UBC2-BRE1 complex to form H2BK123ub1. H2BK123ub1 gives a specific tag for epigenetic transcriptional activation and is also prerequisite for H3K4me and H3K79me formation. H2BK123ub1 also modulates the formation of double-strand breaks during meiosis and is a prerequisite for DNA-damage checkpoint activation. Post-translationally, phosphorylated by STE20 to form H2BS10ph during progression through meiotic prophase. May be correlated with chromosome condensation. In terms of processing, acetylated by GCN5 to form H2BK11ac and H2BK16ac. H2BK16ac can also be formed by ESA1. Acetylation of N-terminal lysines and particularly formation of H2BK11acK16ac has a positive effect on transcription. Sumoylation to form H2BK6su and probably also H2BK16su or H2BK17su, occurs preferentially near the telomeres and represses gene transcription.

It localises to the nucleus. The protein resides in the chromosome. Its function is as follows. Core component of nucleosome. Nucleosomes wrap and compact DNA into chromatin, limiting DNA accessibility to the cellular machineries which require DNA as a template. Histones thereby play a central role in transcription regulation, DNA repair, DNA replication and chromosomal stability. DNA accessibility is regulated via a complex set of post-translational modifications of histones, also called histone code, and nucleosome remodeling. The protein is Histone H2B.1 (HTB1) of Eremothecium gossypii (strain ATCC 10895 / CBS 109.51 / FGSC 9923 / NRRL Y-1056) (Yeast).